We begin with the raw amino-acid sequence, 353 residues long: UDP-N-acetylglucosamine--N-acetylmuramyl-(pentapeptide) pyrophosphoryl-undecaprenol N-acetylglucosamine transferase (353 aa).

UDP-N-acetyl-alpha-D-glucosamine-binding positions include 10–12, Asn-124, Ser-183, and Gln-283; that span reads TGG.

This sequence belongs to the glycosyltransferase 28 family. MurG subfamily.

The protein resides in the cell inner membrane. It carries out the reaction di-trans,octa-cis-undecaprenyl diphospho-N-acetyl-alpha-D-muramoyl-L-alanyl-D-glutamyl-meso-2,6-diaminopimeloyl-D-alanyl-D-alanine + UDP-N-acetyl-alpha-D-glucosamine = di-trans,octa-cis-undecaprenyl diphospho-[N-acetyl-alpha-D-glucosaminyl-(1-&gt;4)]-N-acetyl-alpha-D-muramoyl-L-alanyl-D-glutamyl-meso-2,6-diaminopimeloyl-D-alanyl-D-alanine + UDP + H(+). The protein operates within cell wall biogenesis; peptidoglycan biosynthesis. Functionally, cell wall formation. Catalyzes the transfer of a GlcNAc subunit on undecaprenyl-pyrophosphoryl-MurNAc-pentapeptide (lipid intermediate I) to form undecaprenyl-pyrophosphoryl-MurNAc-(pentapeptide)GlcNAc (lipid intermediate II). This Helicobacter acinonychis (strain Sheeba) protein is UDP-N-acetylglucosamine--N-acetylmuramyl-(pentapeptide) pyrophosphoryl-undecaprenol N-acetylglucosamine transferase.